We begin with the raw amino-acid sequence, 282 residues long: MSDRLAVLPQYLIPKQALTVLAGKLASAKAGGLTTSVIRWFVRRYNVNMTEAANPDIASYKSFNEFFTRPLKDGARPAADADFLCPVDGAISQYGTIDRDQIFQAKGHSYSTTALVGGDRKLAEQFENGSFATLYLSPRDYHRIHMPCDGKLTRMIYVPGALFSVNPTTARGVPGLFARNERVICVFESEFGSFVLTLVGATIVGSMATVWHGTINPPRPGVIREWRYDEQNIRLKKGQEMGRFLLGSTVVMLFPKNTLAFNPDWSPSRAIRMGEQMGSNAN.

Catalysis depends on charge relay system; for autoendoproteolytic cleavage activity residues Asp-88, His-145, and Ser-248. The active-site Schiff-base intermediate with substrate; via pyruvic acid; for decarboxylase activity is Ser-248. Ser-248 carries the post-translational modification Pyruvic acid (Ser); by autocatalysis.

This sequence belongs to the phosphatidylserine decarboxylase family. PSD-B subfamily. Prokaryotic type I sub-subfamily. As to quaternary structure, heterodimer of a large membrane-associated beta subunit and a small pyruvoyl-containing alpha subunit. Pyruvate is required as a cofactor. In terms of processing, is synthesized initially as an inactive proenzyme. Formation of the active enzyme involves a self-maturation process in which the active site pyruvoyl group is generated from an internal serine residue via an autocatalytic post-translational modification. Two non-identical subunits are generated from the proenzyme in this reaction, and the pyruvate is formed at the N-terminus of the alpha chain, which is derived from the carboxyl end of the proenzyme. The autoendoproteolytic cleavage occurs by a canonical serine protease mechanism, in which the side chain hydroxyl group of the serine supplies its oxygen atom to form the C-terminus of the beta chain, while the remainder of the serine residue undergoes an oxidative deamination to produce ammonia and the pyruvoyl prosthetic group on the alpha chain. During this reaction, the Ser that is part of the protease active site of the proenzyme becomes the pyruvoyl prosthetic group, which constitutes an essential element of the active site of the mature decarboxylase.

It is found in the cell membrane. It carries out the reaction a 1,2-diacyl-sn-glycero-3-phospho-L-serine + H(+) = a 1,2-diacyl-sn-glycero-3-phosphoethanolamine + CO2. The protein operates within phospholipid metabolism; phosphatidylethanolamine biosynthesis; phosphatidylethanolamine from CDP-diacylglycerol: step 2/2. Its function is as follows. Catalyzes the formation of phosphatidylethanolamine (PtdEtn) from phosphatidylserine (PtdSer). The sequence is that of Phosphatidylserine decarboxylase proenzyme from Dechloromonas aromatica (strain RCB).